Reading from the N-terminus, the 337-residue chain is Thymidylate synthase (337 aa).

Residues Arg-74 and 199 to 200 (RR) contribute to the dUMP site. Cys-219 serves as the catalytic Nucleophile. DUMP is bound by residues 239–242 (RSGD), Asn-250, and 280–282 (HIY). Position 242 (Asp-242) interacts with (6R)-5,10-methylene-5,6,7,8-tetrahydrofolate. Ala-336 contacts (6R)-5,10-methylene-5,6,7,8-tetrahydrofolate.

It belongs to the thymidylate synthase family. Homodimer.

The enzyme catalyses dUMP + (6R)-5,10-methylene-5,6,7,8-tetrahydrofolate = 7,8-dihydrofolate + dTMP. It functions in the pathway pyrimidine metabolism; dTTP biosynthesis. This chain is Thymidylate synthase (70), found in Homo sapiens (Human).